The following is a 405-amino-acid chain: Transcriptional regulatory protein DEP1 (405 aa).

A compositionally biased stretch (low complexity) spans Met1–Thr12. Disordered regions lie at residues Met1–Ser26 and Ala49–Ser171. Ser56 carries the phosphoserine modification. Composition is skewed to basic and acidic residues over residues Ser86–Gly108 and Glu116–Glu139. Ser120 bears the Phosphoserine mark. A compositionally biased stretch (acidic residues) spans Gln140–Asn157. Ser370 carries the phosphoserine modification.

As to quaternary structure, component of the RPD3C(L) complex composed of at least ASH1, CTI6, DEP1, PHO23, RPD3, RXT2, RXT3, SAP30, SDS3, SIN3, UME1 and UME6.

It is found in the cytoplasm. Its subcellular location is the nucleus. Component of the RPD3C(L) histone deacetylase complex (HDAC) responsible for the deacetylation of lysine residues on the N-terminal part of the core histones (H2A, H2B, H3 and H4). Histone deacetylation gives a tag for epigenetic repression and plays an important role in transcriptional regulation, cell cycle progression and developmental events. The polypeptide is Transcriptional regulatory protein DEP1 (DEP1) (Saccharomyces cerevisiae (strain ATCC 204508 / S288c) (Baker's yeast)).